The chain runs to 144 residues: Large ribosomal subunit protein uL15 (144 aa).

A disordered region spans residues methionine 1 to glycine 52. A compositionally biased stretch (gly residues) spans arginine 21–glycine 31. Residues glycine 32–glycine 44 are compositionally biased toward basic residues.

This sequence belongs to the universal ribosomal protein uL15 family. Part of the 50S ribosomal subunit.

In terms of biological role, binds to the 23S rRNA. The sequence is that of Large ribosomal subunit protein uL15 from Aliivibrio fischeri (strain ATCC 700601 / ES114) (Vibrio fischeri).